A 358-amino-acid polypeptide reads, in one-letter code: Uroporphyrinogen decarboxylase (358 aa).

Substrate-binding positions include 29-33, Phe48, Asp79, Tyr155, Ser210, and His330; that span reads RQAGR.

This sequence belongs to the uroporphyrinogen decarboxylase family. As to quaternary structure, homodimer.

It localises to the cytoplasm. The catalysed reaction is uroporphyrinogen III + 4 H(+) = coproporphyrinogen III + 4 CO2. Its pathway is porphyrin-containing compound metabolism; protoporphyrin-IX biosynthesis; coproporphyrinogen-III from 5-aminolevulinate: step 4/4. In terms of biological role, catalyzes the decarboxylation of four acetate groups of uroporphyrinogen-III to yield coproporphyrinogen-III. The protein is Uroporphyrinogen decarboxylase of Bordetella bronchiseptica (strain ATCC BAA-588 / NCTC 13252 / RB50) (Alcaligenes bronchisepticus).